Consider the following 473-residue polypeptide: JmjC domain-containing protein 4 (473 aa).

Positions 140–433 (PTDGLLTDFS…DFDHPYLDRN (294 aa)) constitute a JmjC domain. Positions 452 to 473 (TNKKNEKRPAEDDSPSQKKTCQ) are disordered.

It localises to the nucleus. Has a role in meiosis. This Schizosaccharomyces pombe (strain 972 / ATCC 24843) (Fission yeast) protein is JmjC domain-containing protein 4 (jmj4).